We begin with the raw amino-acid sequence, 162 residues long: Putative ureidoglycolate lyase (162 aa).

This sequence belongs to the ureidoglycolate lyase family. Homodimer. Ni(2+) serves as cofactor.

The catalysed reaction is (S)-ureidoglycolate = urea + glyoxylate. It functions in the pathway nitrogen metabolism; (S)-allantoin degradation. Catalyzes the catabolism of the allantoin degradation intermediate (S)-ureidoglycolate, generating urea and glyoxylate. Involved in the utilization of allantoin as nitrogen source. This Agrobacterium fabrum (strain C58 / ATCC 33970) (Agrobacterium tumefaciens (strain C58)) protein is Putative ureidoglycolate lyase.